A 715-amino-acid chain; its full sequence is Polyribonucleotide nucleotidyltransferase (715 aa).

Mg(2+) is bound by residues D493 and D499. Residues 560-619 (PRMITVKINPEKIRDVIGKGGSVIRALTEETGTTIDISDDGVVTIASTSSEGMAEAKKRI) form the KH domain. In terms of domain architecture, S1 motif spans 629 to 697 (GQVYEGTVLK…EKGRVRLSAK (69 aa)).

The protein belongs to the polyribonucleotide nucleotidyltransferase family. Requires Mg(2+) as cofactor.

It is found in the cytoplasm. It catalyses the reaction RNA(n+1) + phosphate = RNA(n) + a ribonucleoside 5'-diphosphate. In terms of biological role, involved in mRNA degradation. Catalyzes the phosphorolysis of single-stranded polyribonucleotides processively in the 3'- to 5'-direction. This is Polyribonucleotide nucleotidyltransferase from Burkholderia orbicola (strain MC0-3).